A 401-amino-acid polypeptide reads, in one-letter code: Cytochrome P450 BJ-1 (401 aa).

Cys350 is a heme binding site.

This sequence belongs to the cytochrome P450 family. Heme serves as cofactor.

Cytochromes P450 are a group of heme-thiolate monooxygenases. They oxidize a variety of structurally unrelated compounds, including steroids, fatty acids, and xenobiotics. This chain is Cytochrome P450 BJ-1 (cyp112), found in Bradyrhizobium diazoefficiens (strain JCM 10833 / BCRC 13528 / IAM 13628 / NBRC 14792 / USDA 110).